A 195-amino-acid polypeptide reads, in one-letter code: Shikimate kinase (195 aa).

G33–T38 serves as a coordination point for ATP. T37 is a Mg(2+) binding site. D55, R79, and G101 together coordinate substrate. Residue R139 participates in ATP binding. R158 contributes to the substrate binding site. R175 contacts ATP.

The protein belongs to the shikimate kinase family. In terms of assembly, monomer. It depends on Mg(2+) as a cofactor.

The protein resides in the cytoplasm. It catalyses the reaction shikimate + ATP = 3-phosphoshikimate + ADP + H(+). Its pathway is metabolic intermediate biosynthesis; chorismate biosynthesis; chorismate from D-erythrose 4-phosphate and phosphoenolpyruvate: step 5/7. Its function is as follows. Catalyzes the specific phosphorylation of the 3-hydroxyl group of shikimic acid using ATP as a cosubstrate. This chain is Shikimate kinase, found in Nitrosospira multiformis (strain ATCC 25196 / NCIMB 11849 / C 71).